A 385-amino-acid polypeptide reads, in one-letter code: 8-amino-7-oxononanoate synthase (385 aa).

Residue arginine 21 participates in substrate binding. Residue 108-109 participates in pyridoxal 5'-phosphate binding; sequence GF. A substrate-binding site is contributed by histidine 133. Residues serine 179, histidine 207, and threonine 233 each coordinate pyridoxal 5'-phosphate. Lysine 236 is subject to N6-(pyridoxal phosphate)lysine. Threonine 352 serves as a coordination point for substrate.

This sequence belongs to the class-II pyridoxal-phosphate-dependent aminotransferase family. BioF subfamily. In terms of assembly, homodimer. Requires pyridoxal 5'-phosphate as cofactor.

The enzyme catalyses 6-carboxyhexanoyl-[ACP] + L-alanine + H(+) = (8S)-8-amino-7-oxononanoate + holo-[ACP] + CO2. Its pathway is cofactor biosynthesis; biotin biosynthesis. In terms of biological role, catalyzes the decarboxylative condensation of pimeloyl-[acyl-carrier protein] and L-alanine to produce 8-amino-7-oxononanoate (AON), [acyl-carrier protein], and carbon dioxide. The protein is 8-amino-7-oxononanoate synthase of Klebsiella pneumoniae subsp. pneumoniae (strain ATCC 700721 / MGH 78578).